A 160-amino-acid polypeptide reads, in one-letter code: Cytochrome c-type biogenesis protein CcmE (160 aa).

Over 1–8 the chain is Cytoplasmic; the sequence is MNPRRKQR. A helical; Signal-anchor for type II membrane protein transmembrane segment spans residues 9–29; that stretch reads LTWVAILVIGVSVATGLMLYA. Topologically, residues 30-160 are periplasmic; that stretch reads LSQSIDLFYT…PNTVEKGEGQ (131 aa). Heme is bound by residues His130 and Tyr134.

This sequence belongs to the CcmE/CycJ family.

The protein localises to the cell inner membrane. Functionally, heme chaperone required for the biogenesis of c-type cytochromes. Transiently binds heme delivered by CcmC and transfers the heme to apo-cytochromes in a process facilitated by CcmF and CcmH. This Idiomarina loihiensis (strain ATCC BAA-735 / DSM 15497 / L2-TR) protein is Cytochrome c-type biogenesis protein CcmE.